Consider the following 222-residue polypeptide: UPF0758 protein YE0063 (222 aa).

Residues 100 to 222 (VLQNPEITQK…CVSFAERGWL (123 aa)) enclose the MPN domain. Zn(2+)-binding residues include His171, His173, and Asp184. Positions 171-184 (HNHPSGKAEPSQAD) match the JAMM motif motif.

It belongs to the UPF0758 family. YicR subfamily.

The sequence is that of UPF0758 protein YE0063 from Yersinia enterocolitica serotype O:8 / biotype 1B (strain NCTC 13174 / 8081).